The primary structure comprises 475 residues: Cytochrome c-552 (475 aa).

The N-terminal stretch at 1 to 29 is a signal peptide; the sequence is MSIKHWMSAPIAVATLFASQLLLAGSVLA. The segment at 38 to 57 is disordered; that stretch reads PRNDAFEQKHPDQYHSWKAT. A heme c-binding site is contributed by His-92. Residues Cys-120, Cys-123, and Lys-124 each contribute to the heme site. Heme c-binding residues include Cys-158, Cys-161, His-162, Cys-207, Cys-210, and His-211. 4 residues coordinate Ca(2+): Glu-213, Tyr-214, Lys-259, and Gln-261. Position 214 (Tyr-214) interacts with substrate. His-262 contacts substrate. Residues His-273, Cys-280, Cys-283, His-284, His-299, Cys-312, Cys-315, His-316, and His-391 each contribute to the heme c site.

It belongs to the cytochrome c-552 family. Ca(2+) serves as cofactor. Heme c is required as a cofactor.

The protein resides in the periplasm. The enzyme catalyses 6 Fe(III)-[cytochrome c] + NH4(+) + 2 H2O = 6 Fe(II)-[cytochrome c] + nitrite + 8 H(+). The protein operates within nitrogen metabolism; nitrate reduction (assimilation). Functionally, catalyzes the reduction of nitrite to ammonia, consuming six electrons in the process. The protein is Cytochrome c-552 of Vibrio parahaemolyticus serotype O3:K6 (strain RIMD 2210633).